A 220-amino-acid chain; its full sequence is Metalloproteinase inhibitor 2 (220 aa).

A signal peptide spans 1 to 26; sequence MGAAARSLPLAFCLLLLGTLLPRADA. Cys27 contributes to the Zn(2+) binding site. Residues 27 to 30 are involved in metalloproteinase-binding; sequence CSCS. 6 cysteine pairs are disulfide-bonded: Cys27–Cys98, Cys29–Cys127, Cys39–Cys152, Cys154–Cys201, Cys159–Cys164, and Cys172–Cys193. The NTR domain occupies 27–152; the sequence is CSCSPVHPQQ…SLNHRYQMGC (126 aa).

It belongs to the protease inhibitor I35 (TIMP) family. As to quaternary structure, interacts (via the C-terminal) with MMP2 (via the C-terminal PEX domain); the interaction inhibits the MMP2 activity. Post-translationally, the activity of TIMP2 is dependent on the presence of disulfide bonds.

The protein resides in the secreted. Its function is as follows. Complexes with metalloproteinases (such as collagenases) and irreversibly inactivates them by binding to their catalytic zinc cofactor. The protein is Metalloproteinase inhibitor 2 (TIMP2) of Bos taurus (Bovine).